A 220-amino-acid chain; its full sequence is PKHD-type hydroxylase sync_1544 (220 aa).

The Fe2OG dioxygenase domain maps to 79 to 173 (KLHRFLISKT…RTVCVGWIES (95 aa)). Fe cation-binding residues include His97, Asp99, and His154. Residue Arg164 participates in 2-oxoglutarate binding.

The cofactor is Fe(2+). L-ascorbate is required as a cofactor.

This chain is PKHD-type hydroxylase sync_1544, found in Synechococcus sp. (strain CC9311).